A 334-amino-acid polypeptide reads, in one-letter code: Aspartate carbamoyltransferase catalytic subunit (334 aa).

Carbamoyl phosphate contacts are provided by Arg-71 and Thr-72. Lys-99 contributes to the L-aspartate binding site. The carbamoyl phosphate site is built by Arg-121, His-151, and Gln-154. Residues Arg-184 and Arg-239 each coordinate L-aspartate. Residues Gly-280 and Pro-281 each contribute to the carbamoyl phosphate site.

Belongs to the aspartate/ornithine carbamoyltransferase superfamily. ATCase family. As to quaternary structure, heterododecamer (2C3:3R2) of six catalytic PyrB chains organized as two trimers (C3), and six regulatory PyrI chains organized as three dimers (R2).

The enzyme catalyses carbamoyl phosphate + L-aspartate = N-carbamoyl-L-aspartate + phosphate + H(+). It participates in pyrimidine metabolism; UMP biosynthesis via de novo pathway; (S)-dihydroorotate from bicarbonate: step 2/3. Its function is as follows. Catalyzes the condensation of carbamoyl phosphate and aspartate to form carbamoyl aspartate and inorganic phosphate, the committed step in the de novo pyrimidine nucleotide biosynthesis pathway. This Pseudomonas syringae pv. syringae (strain B728a) protein is Aspartate carbamoyltransferase catalytic subunit.